The sequence spans 290 residues: Acetyl-coenzyme A carboxylase carboxyl transferase subunit beta (290 aa).

In terms of domain architecture, CoA carboxyltransferase N-terminal spans 28-290; sequence IMTKCPKCKK…TGGDIEWLQD (263 aa). The Zn(2+) site is built by Cys32, Cys35, Cys51, and Cys54. Residues 32–54 form a C4-type zinc finger; the sequence is CPKCKKIMLTKELDKNMRVCMNC.

It belongs to the AccD/PCCB family. As to quaternary structure, acetyl-CoA carboxylase is a heterohexamer composed of biotin carboxyl carrier protein (AccB), biotin carboxylase (AccC) and two subunits each of ACCase subunit alpha (AccA) and ACCase subunit beta (AccD). The cofactor is Zn(2+).

It localises to the cytoplasm. It carries out the reaction N(6)-carboxybiotinyl-L-lysyl-[protein] + acetyl-CoA = N(6)-biotinyl-L-lysyl-[protein] + malonyl-CoA. It participates in lipid metabolism; malonyl-CoA biosynthesis; malonyl-CoA from acetyl-CoA: step 1/1. Inhibited by pyrrolidine dione antibiotics moiramide B (CPD1) and CPD2. In terms of biological role, component of the acetyl coenzyme A carboxylase (ACC) complex. Biotin carboxylase (BC) catalyzes the carboxylation of biotin on its carrier protein (BCCP) and then the CO(2) group is transferred by the transcarboxylase to acetyl-CoA to form malonyl-CoA. The protein is Acetyl-coenzyme A carboxylase carboxyl transferase subunit beta of Bacillus subtilis (strain 168).